Here is a 347-residue protein sequence, read N- to C-terminus: Bifunctional methylenetetrahydrofolate dehydrogenase/cyclohydrolase 2, mitochondrial (347 aa).

Residues Tyr-98–Lys-102 and Val-145–Leu-147 contribute to the substrate site. NAD(+) contacts are provided by residues Gly-214 to Ser-216 and Arg-247. Pro-323–Gly-327 provides a ligand contact to substrate.

The protein belongs to the tetrahydrofolate dehydrogenase/cyclohydrolase family. The cofactor is Mg(2+).

The protein resides in the mitochondrion inner membrane. The catalysed reaction is (6R)-5,10-methylene-5,6,7,8-tetrahydrofolate + NAD(+) = (6R)-5,10-methenyltetrahydrofolate + NADH. It catalyses the reaction (6R)-5,10-methenyltetrahydrofolate + H2O = (6R)-10-formyltetrahydrofolate + H(+). It carries out the reaction (6R)-5,10-methylene-5,6,7,8-tetrahydrofolate + NADP(+) = (6R)-5,10-methenyltetrahydrofolate + NADPH. The protein operates within one-carbon metabolism; tetrahydrofolate interconversion. Its function is as follows. Bifunctional mitochondrial folate-interconverting enzyme that has both NAD/NADP-dependent methylenetetrahydrofolate dehydrogenase and methenyltetrahydrofolate cyclohydrolase activities. This Callithrix jacchus (White-tufted-ear marmoset) protein is Bifunctional methylenetetrahydrofolate dehydrogenase/cyclohydrolase 2, mitochondrial.